We begin with the raw amino-acid sequence, 1230 residues long: Protein transport protein Sec31A (1230 aa).

WD repeat units follow at residues 4 to 47 (KEID…EIFE), 64 to 111 (SSSH…AGDK), 120 to 160 (KHTG…TPMT), 166 to 206 (QPPE…PIIK), 209 to 254 (DHSN…SPLR), 258 to 298 (NHAR…VLYE), and 301 to 342 (TNTQ…DGLR). The interval 161 to 470 (PGAKTQPPED…IEASQTEFEK (310 aa)) is interaction with SEC13. Residues 397–429 (SFSFGGKLVTFESVAVPLQQGAEQQRRQPVFIS) form a WD 8; interaction with SEC13 repeat. At R423 the chain carries Asymmetric dimethylarginine. Phosphoserine occurs at positions 526 and 531. K646 participates in a covalent cross-link: Glycyl lysine isopeptide (Lys-Gly) (interchain with G-Cter in ubiquitin). 2 disordered regions span residues 789-905 (QGKP…ASNA) and 924-1104 (MYTA…PIGN). A Phosphoserine modification is found at S798. An interaction with PDCD6 region spans residues 799 to 1123 (SQSPYERQPL…TEKITKKPIP (325 aa)). Residues 841 to 847 (GFIMQGN) carry the ALG-2-binding site motif-2 (ABS-2) motif. Positions 866-876 (QLPPYPQPQPY) are enriched in pro residues. Composition is skewed to low complexity over residues 930-940 (ASSPTSSSAAS) and 959-975 (PSSS…GTPP). 2 stretches are compositionally biased toward polar residues: residues 981–995 (PASQ…QDQA) and 1033–1064 (PIMN…SFPQ). A Phosphothreonine modification is found at T1171. S1173 is subject to Phosphoserine. K1227 is covalently cross-linked (Glycyl lysine isopeptide (Lys-Gly) (interchain with G-Cter in ubiquitin)).

This sequence belongs to the WD repeat SEC31 family. COPII is composed of at least 5 proteins: the SEC23/24 complex, the SEC13/31 complex and SAR1. SEC13 and SEC31 make a 2:2 tetramer that forms the edge element of the COPII outer coat. The tetramer self-assembles in multiple copies to form the complete polyhedral cage. Interacts (via WD 8) with SEC13. Interacts with PDCD6; interaction takes place in response to cytosolic calcium increase and leads to bridge together the BCR(KLHL12) complex and SEC31A, leading to monoubiquitination. Interacts with KLHL12. In terms of processing, monoubiquitinated by the BCR(KLHL12) E3 ubiquitin ligase complex, leading to regulate the size of COPII coats.

It is found in the cytoplasm. The protein localises to the cytoplasmic vesicle. It localises to the COPII-coated vesicle membrane. Its subcellular location is the endoplasmic reticulum membrane. Functionally, component of the coat protein complex II (COPII) which promotes the formation of transport vesicles from the endoplasmic reticulum (ER). The coat has two main functions, the physical deformation of the endoplasmic reticulum membrane into vesicles and the selection of cargo molecules. The sequence is that of Protein transport protein Sec31A (Sec31a) from Mus musculus (Mouse).